The sequence spans 441 residues: Cysteine desulfurase, mitosomal (441 aa).

Pyridoxal 5'-phosphate-binding positions include 107–108, N189, Q217, and 237–239; these read AT and SGH. Position 240 is an N6-(pyridoxal phosphate)lysine (K240). T277 serves as a coordination point for pyridoxal 5'-phosphate. The active-site Cysteine persulfide intermediate is C367. C367 serves as a coordination point for [2Fe-2S] cluster.

Belongs to the class-V pyridoxal-phosphate-dependent aminotransferase family. NifS/IscS subfamily. Interacts with ISD11. Pyridoxal 5'-phosphate serves as cofactor.

Its subcellular location is the mitosome. It catalyses the reaction (sulfur carrier)-H + L-cysteine = (sulfur carrier)-SH + L-alanine. In terms of biological role, catalyzes the removal of elemental sulfur from cysteine to produce alanine. It supplies the inorganic sulfur for iron-sulfur (Fe-S) clusters in mitosomes. This chain is Cysteine desulfurase, mitosomal, found in Trachipleistophora hominis (Microsporidian parasite).